Here is a 944-residue protein sequence, read N- to C-terminus: MTVSGPETPEPRPSDPGASSAEQLRKEGNELFKCGDYEGALTAYTQALSLGATPQDQAILHRNRAACHLKLEDYSKAESEASKAIEKDGGDVKALYRRSQALEKLGRLDQAVLDLKRCVSLEPKNKVFQESLRNIGGQIQEKVRYMSSTDAKVEQMFQILLDPKEKGTEKKQKASQNLVVLAREDAGAEKIFRSNGVQLLQRLLDTEETDLMLAALRTLVGICSEHQSRTVATLSVLGTRRVVSILGVENQAVSLAACHLLQVIFDALKEGVKKGFRGKEGAIIVDPARELKVLINSLLELLTEVGVSGQGRDNALTLLIKMVPRKSPKDPNNSLTLWVIDQGLKKILEVGGSLQDAAGELTVTANSRMSASILLSKLFDDLKCDAERENFHRLCENYIRNWFEGHGLAGKLRAIQTVSCLLQGPCDAGNRALELSGVMESVIALCASEREEEQLVAVEALIHAAGKAKRASFITANGVSLLKDLYKGSERDSIRIRALVGLCKLGSAGGTDFSMKQFAEGSTLKLAKQCRKWLCNDQIDAGTRRWAVEGLAYLTFDADVKEEFVEDEAALKALFQLSRSEERSVLFAVGSALVNCTNSYDYEEPDPKMVELAKYAKQHVPEQHPKDKPSFVRARVKKLLAAGVVSAMTCMVKTESPVLTNSCRELLSRVFLALVEEVEDRGTVVAQGGGKALLPLALEGTDVGQTKAAQALAKLTITSNPEMTFPGERIYEVVRPLVSLLHLSCSGLQNFEALMALTNLAGISERLRQKILKEKAVPMIEGYMFEEHEMIRRAATECMCNLAMSKEVQDLFEAQGNDRLKLLVLYSGEDDELLRRAAAGGLAMLTSMRPALCSRIPQVTTHWLEILQALLLSPNQELQHRGTVVVLNMMQSSKEIAGTLMESEVLEILSVLAKGEESPVTRAAAACLEKAVEYRLIQPNQDGE.

The tract at residues 1–25 (MTVSGPETPEPRPSDPGASSAEQLR) is disordered. TPR repeat units follow at residues 21–54 (AEQL…GATP), 58–91 (AILH…DGGD), and 92–125 (VKAL…EPKN). Lys70 carries the N6-acetyllysine modification. The residue at position 483 (Lys483) is an N6-acetyllysine.

In terms of assembly, interacts with PGR isoforms A and B as well as with NR3C1 in the absence of ligand, and with HSP90AB1. Binding to HSP90AB1 involves 2 UNC45A monomers per HSP90AB1 dimer. Detected in spleen, bone marrow, lung and ovary, and at lower levels in testis, kidney, heart and brain (at protein level). Ubiquitous. Detected in uterus, large intestine, kidney, spleen, lung, brain, liver and ovary.

It is found in the cytoplasm. The protein localises to the perinuclear region. It localises to the nucleus. May act as co-chaperone for HSP90 (Potential). Prevents the stimulation of HSP90AB1 ATPase activity by AHSA1. Positive factor in promoting PGR function in the cell. May be necessary for proper folding of myosin (Potential). Necessary for normal cell proliferation. Necessary for normal myotube formation and myosin accumulation during muscle cell development. May play a role in erythropoiesis in stroma cells in the spleen. The chain is Protein unc-45 homolog A (Unc45a) from Mus musculus (Mouse).